Reading from the N-terminus, the 880-residue chain is Alanine--tRNA ligase (880 aa).

4 residues coordinate Zn(2+): histidine 566, histidine 570, cysteine 668, and histidine 672.

It belongs to the class-II aminoacyl-tRNA synthetase family. Requires Zn(2+) as cofactor.

The protein localises to the cytoplasm. The enzyme catalyses tRNA(Ala) + L-alanine + ATP = L-alanyl-tRNA(Ala) + AMP + diphosphate. Functionally, catalyzes the attachment of alanine to tRNA(Ala) in a two-step reaction: alanine is first activated by ATP to form Ala-AMP and then transferred to the acceptor end of tRNA(Ala). Also edits incorrectly charged Ser-tRNA(Ala) and Gly-tRNA(Ala) via its editing domain. The protein is Alanine--tRNA ligase of Nostoc punctiforme (strain ATCC 29133 / PCC 73102).